The sequence spans 908 residues: Bifunctional uridylyltransferase/uridylyl-removing enzyme (908 aa).

Residues 1 to 360 form a uridylyltransferase region; it reads MFDTPAVFAR…LERIFRRRRR (360 aa). The segment at 361–718 is uridylyl-removing; sequence IKQGYKVVRG…LDPDEDRDAT (358 aa). One can recognise an HD domain in the interval 477 to 599; the sequence is VDEHTIQTIV…VQTTKRLDLL (123 aa). 2 ACT domains span residues 719–801 and 829–904; these read RACF…LKSR and IIEV…GAER.

The protein belongs to the GlnD family. It depends on Mg(2+) as a cofactor.

It carries out the reaction [protein-PII]-L-tyrosine + UTP = [protein-PII]-uridylyl-L-tyrosine + diphosphate. The enzyme catalyses [protein-PII]-uridylyl-L-tyrosine + H2O = [protein-PII]-L-tyrosine + UMP + H(+). Its activity is regulated as follows. Uridylyltransferase (UTase) activity is inhibited by glutamine, while glutamine activates uridylyl-removing (UR) activity. In terms of biological role, modifies, by uridylylation and deuridylylation, the PII regulatory proteins (GlnB and homologs), in response to the nitrogen status of the cell that GlnD senses through the glutamine level. Under low glutamine levels, catalyzes the conversion of the PII proteins and UTP to PII-UMP and PPi, while under higher glutamine levels, GlnD hydrolyzes PII-UMP to PII and UMP (deuridylylation). Thus, controls uridylylation state and activity of the PII proteins, and plays an important role in the regulation of nitrogen assimilation and metabolism. In Ruegeria pomeroyi (strain ATCC 700808 / DSM 15171 / DSS-3) (Silicibacter pomeroyi), this protein is Bifunctional uridylyltransferase/uridylyl-removing enzyme.